The following is a 772-amino-acid chain: MDVEGGGAAARRKGGWWWWREEAVLAYQSLGVVYGEVAAAPLYVYRSAFAGGDIEHSAGNEEIYGALSLVFWTLTLVPLAKYVLLVLRADDAGEGGTFALYSLICRRVRAGLLPPCAAAAAGEELDAAGAAAAPVSAVRAALERHRVLQRLLLLLALLGTCMVIGDGVLTPAVSVFSAVSGLELSMDKDQHKYILLPITCVILVCLFALQHYGTHRVGFLFAPIVCLWLLCISIIGVYNIIHWNPHVYQALSPYYMYKFLRKTQTGGWMSLGGILLCVTGSEAMYADLGHFTQNSIKMAFTLLVYPALVLAYMGQAAYISRHHNFEDGSHIGFYVSVPEKIRWPVLGIAILASVVGSQAIITGTFSIIKQCSSLNCFPRVKIVHTSSTVHGQIYIPEINWILMILCLSVTIGFRDTKHLTNAQGLAVITVMLVTTCLMSLVILLCWNKSIVYALSFLLFFGAIEVIYFAASLVKFHEGAWVPVTLSFIFMMVMCVWHYGTKKKYEFDVQNKVSISWLLNIGPSLGIVRVRGIGLIHTELMSGIPAIFSHFVTNLPAFHQVLVFLCIKSVSVPHVQPEERFLVGRIGPKKYRIYRVIVRYGYRDVQKDDVEFEKDLVSSIAEFIRCADSNQNSFMDGASHSCEGLSFISKGLPLEEEEGEFDGSDSTGSSAHKEINPNTTAPKPKRVRFALPKDTKIDREVRGELQELMEAREAGMSFITGRSHMKAKSGSGLIKQIVINFGYEFLRRNSRGPAFAVNLPHVSTVEVGMICLV.

Over 1–23 (MDVEGGGAAARRKGGWWWWREEA) the chain is Cytoplasmic. A helical transmembrane segment spans residues 24–44 (VLAYQSLGVVYGEVAAAPLYV). The Extracellular portion of the chain corresponds to 45–66 (YRSAFAGGDIEHSAGNEEIYGA). A helical transmembrane segment spans residues 67 to 87 (LSLVFWTLTLVPLAKYVLLVL). The Cytoplasmic segment spans residues 88-150 (RADDAGEGGT…ALERHRVLQR (63 aa)). A helical transmembrane segment spans residues 151–171 (LLLLLALLGTCMVIGDGVLTP). Residues 172-192 (AVSVFSAVSGLELSMDKDQHK) are Extracellular-facing. The chain crosses the membrane as a helical span at residues 193 to 213 (YILLPITCVILVCLFALQHYG). Residues 214–216 (THR) lie on the Cytoplasmic side of the membrane. Residues 217 to 237 (VGFLFAPIVCLWLLCISIIGV) form a helical membrane-spanning segment. Topologically, residues 238-265 (YNIIHWNPHVYQALSPYYMYKFLRKTQT) are extracellular. A helical transmembrane segment spans residues 266-286 (GGWMSLGGILLCVTGSEAMYA). The Cytoplasmic portion of the chain corresponds to 287 to 298 (DLGHFTQNSIKM). A helical transmembrane segment spans residues 299–319 (AFTLLVYPALVLAYMGQAAYI). The Extracellular portion of the chain corresponds to 320–344 (SRHHNFEDGSHIGFYVSVPEKIRWP). A helical transmembrane segment spans residues 345-365 (VLGIAILASVVGSQAIITGTF). Topologically, residues 366–392 (SIIKQCSSLNCFPRVKIVHTSSTVHGQ) are cytoplasmic. Residues 393–413 (IYIPEINWILMILCLSVTIGF) form a helical membrane-spanning segment. Over 414-423 (RDTKHLTNAQ) the chain is Extracellular. The chain crosses the membrane as a helical span at residues 424-444 (GLAVITVMLVTTCLMSLVILL). At 445–449 (CWNKS) the chain is on the cytoplasmic side. Residues 450–470 (IVYALSFLLFFGAIEVIYFAA) traverse the membrane as a helical segment. Residues 471–477 (SLVKFHE) are Extracellular-facing. A helical membrane pass occupies residues 478–498 (GAWVPVTLSFIFMMVMCVWHY). Residues 499–772 (GTKKKYEFDV…TVEVGMICLV (274 aa)) lie on the Cytoplasmic side of the membrane. A disordered region spans residues 656 to 684 (EEGEFDGSDSTGSSAHKEINPNTTAPKPK).

The protein belongs to the HAK/KUP transporter (TC 2.A.72.3) family.

The protein resides in the membrane. High-affinity potassium transporter. In Oryza sativa subsp. japonica (Rice), this protein is Potassium transporter 24 (HAK24).